The chain runs to 748 residues: Structure-specific endonuclease subunit SLX4 (748 aa).

The disordered stretch occupies residues 50–102 (LSSDDDSISTQVKSVTAQKSPITQETTKNDTERNKDVDKSCNPVSTSQPDLGE). Residues 57–75 (ISTQVKSVTAQKSPITQET) are compositionally biased toward polar residues. Threonine 72 carries the post-translational modification Phosphothreonine; by ATR and ATM. Positions 76–88 (TKNDTERNKDVDK) are enriched in basic and acidic residues. Residue threonine 113 is modified to Phosphothreonine; by ATR and ATM. Disordered stretches follow at residues 215–236 (IKTQ…KGEK) and 277–303 (EKSS…PPEL). A compositionally biased stretch (basic and acidic residues) spans 222-236 (NSDKPPRARNNKGEK). The span at 277-291 (EKSSSSLDNQESSQQ) shows a compositional bias: low complexity. Residue serine 289 is modified to Phosphoserine; by ATR and ATM. Threonine 319 is modified (phosphothreonine; by ATR and ATM). Phosphoserine; by ATR and ATM is present on residues serine 329 and serine 355.

The protein belongs to the SLX4 family. Forms a heterodimer with SLX1. Interacts with RAD1; catalytic subunit of the RAD1-RAD10 endonuclease. Interacts with RTT107. Post-translationally, phosphorylated by ATR (MEC1) and ATM (TEL1) upon DNA damage. This appears to be required for the function with the RAD1-RAD10 endonuclease.

The protein resides in the nucleus. The protein localises to the cytoplasm. Functionally, regulatory subunit that interacts with and increases the activity of different structure-specific endonucleases. Has several distinct roles in protecting genome stability by resolving diverse forms of deleterious DNA structures. Component of the SLX1-SLX4 structure-specific endonuclease that resolves DNA secondary structures generated during DNA repair and recombination. Has endonuclease activity towards branched DNA substrates, introducing single-strand cuts in duplex DNA close to junctions with ss-DNA. Has a preference for simple Y, 5'-flap and replication fork-like structures. It cleaves the strand bearing the 5'-non-homologous arm at the branch site junction and generates ligatable, nicked products from the 5'-flap or replication fork substrates. Plays a critical role in maintaining the integrity of the ribosomal DNA (rDNA) loci, where it has a role in re-starting stalled replication forks. Has Holliday junction resolvase activity in vitro. Interacts with the structure-specific RAD1-RAD10 endonuclease and promotes RAD1-RAD10-dependent 3'-non-homologous tail removal (NHTR) during repair of double-strand breaks by single-strand annealing. SLX4 also promotes recovery from DNA-alkylation-induced replisome stalling during DNA replication by facilitating the error-free mode of lesion bypass. This does not require SLX1 or RAD1-RAD10, but probably RTT107. This is Structure-specific endonuclease subunit SLX4 from Saccharomyces cerevisiae (strain YJM789) (Baker's yeast).